Here is a 185-residue protein sequence, read N- to C-terminus: Inner membrane-spanning protein YciB (185 aa).

The next 5 helical transmembrane spans lie at 27–47, 53–73, 76–96, 118–138, and 149–169; these read IVLVVATILQIVILKWKYGIV, IMASAVVFFGLLTAYFNEIRY, WKVTIINGLFAIVLLVAQFQF, TLNLGWALFFIICMLVNIYIS, and FKSFGIIGMTVIATIISGVYI.

This sequence belongs to the YciB family.

Its subcellular location is the cell inner membrane. Its function is as follows. Plays a role in cell envelope biogenesis, maintenance of cell envelope integrity and membrane homeostasis. In Haemophilus influenzae (strain 86-028NP), this protein is Inner membrane-spanning protein YciB.